The following is a 36-amino-acid chain: Omega-agatoxin-Aa1b (36 aa).

This sequence belongs to the neurotoxin 04 (omega-agtx) family. 01 (type I omega-agtx) subfamily. Expressed by the venom gland.

It localises to the secreted. In terms of biological role, omega-agatoxin are antagonist of voltage-gated calcium channels. They block insect neuromuscular transmission presynaptically. This toxin is a blocker of L-type calcium channels (Cav/CACNA1). This Agelenopsis aperta (North American funnel-web spider) protein is Omega-agatoxin-Aa1b.